Reading from the N-terminus, the 225-residue chain is PKHD-type hydroxylase Smal_0990 (225 aa).

Residues 78-177 enclose the Fe2OG dioxygenase domain; sequence KYLPPRFNRY…RVASFFWVQS (100 aa). Fe cation-binding residues include histidine 96, aspartate 98, and histidine 158. Arginine 168 lines the 2-oxoglutarate pocket.

Fe(2+) is required as a cofactor. The cofactor is L-ascorbate.

This is PKHD-type hydroxylase Smal_0990 from Stenotrophomonas maltophilia (strain R551-3).